The sequence spans 62 residues: MNAITTIKCPQCRKETTLAGNPYRPFCSQRCKMIDLGTWADEGYRIPGEKAPESGDEEPGDE.

Cysteine 9, cysteine 12, cysteine 27, and cysteine 31 together coordinate Zn(2+). Basic and acidic residues predominate over residues 43 to 53 (GYRIPGEKAPE). The disordered stretch occupies residues 43–62 (GYRIPGEKAPESGDEEPGDE).

It belongs to the DNA gyrase inhibitor YacG family. As to quaternary structure, interacts with GyrB. Zn(2+) serves as cofactor.

In terms of biological role, inhibits all the catalytic activities of DNA gyrase by preventing its interaction with DNA. Acts by binding directly to the C-terminal domain of GyrB, which probably disrupts DNA binding by the gyrase. The chain is DNA gyrase inhibitor YacG from Citrifermentans bemidjiense (strain ATCC BAA-1014 / DSM 16622 / JCM 12645 / Bem) (Geobacter bemidjiensis).